A 206-amino-acid polypeptide reads, in one-letter code: Ribosomal RNA small subunit methyltransferase G (206 aa).

S-adenosyl-L-methionine is bound by residues G71, F76, 122–123, and R135; that span reads AE.

The protein belongs to the methyltransferase superfamily. RNA methyltransferase RsmG family.

It localises to the cytoplasm. In terms of biological role, specifically methylates the N7 position of a guanine in 16S rRNA. This chain is Ribosomal RNA small subunit methyltransferase G, found in Bacteroides thetaiotaomicron (strain ATCC 29148 / DSM 2079 / JCM 5827 / CCUG 10774 / NCTC 10582 / VPI-5482 / E50).